A 173-amino-acid polypeptide reads, in one-letter code: Crossover junction endodeoxyribonuclease RuvC (173 aa).

Catalysis depends on residues D8, E67, and D139. Mg(2+) is bound by residues D8, E67, and D139.

The protein belongs to the RuvC family. Homodimer which binds Holliday junction (HJ) DNA. The HJ becomes 2-fold symmetrical on binding to RuvC with unstacked arms; it has a different conformation from HJ DNA in complex with RuvA. In the full resolvosome a probable DNA-RuvA(4)-RuvB(12)-RuvC(2) complex forms which resolves the HJ. It depends on Mg(2+) as a cofactor.

It localises to the cytoplasm. It catalyses the reaction Endonucleolytic cleavage at a junction such as a reciprocal single-stranded crossover between two homologous DNA duplexes (Holliday junction).. The RuvA-RuvB-RuvC complex processes Holliday junction (HJ) DNA during genetic recombination and DNA repair. Endonuclease that resolves HJ intermediates. Cleaves cruciform DNA by making single-stranded nicks across the HJ at symmetrical positions within the homologous arms, yielding a 5'-phosphate and a 3'-hydroxyl group; requires a central core of homology in the junction. The consensus cleavage sequence is 5'-(A/T)TT(C/G)-3'. Cleavage occurs on the 3'-side of the TT dinucleotide at the point of strand exchange. HJ branch migration catalyzed by RuvA-RuvB allows RuvC to scan DNA until it finds its consensus sequence, where it cleaves and resolves the cruciform DNA. In Shewanella sp. (strain MR-4), this protein is Crossover junction endodeoxyribonuclease RuvC.